The chain runs to 309 residues: Putative F-box protein At4g05475 (309 aa).

Positions 1–26 (MATSTTLQSLLMKEDEEQRNKRRTTS) are disordered. The region spanning 37–84 (RINWVDLPPELTTSILLRLSVTDILDNARKLCRAWRRICKDPSMWRKI) is the F-box domain.

The polypeptide is Putative F-box protein At4g05475 (Arabidopsis thaliana (Mouse-ear cress)).